A 571-amino-acid chain; its full sequence is Vesicle-associated protein 1-4 (571 aa).

Residues 1-126 enclose the MSP 1 domain; sequence MSTDELLTFD…EETIFKIIYV (126 aa). The interval 132 to 154 is disordered; sequence QSPVQEGLEDGSSPSASVSDKGN. The segment covering 143-153 has biased composition (polar residues); sequence SSPSASVSDKG. Residues 176–296 enclose the MSP 2 domain; it reads LLIIDPVDVQ…EETRLKVMYV (121 aa). The segment at 297–322 is disordered; it reads TPPQPPSPVQEGTEEGSSPRASVSDN. Residues 311-322 show a composition bias toward polar residues; it reads EGSSPRASVSDN. Residues 356 to 493 form the TIR domain; it reads PQYQVFINFR…KWKEALSSVF (138 aa). E430 is a catalytic residue.

Belongs to the VAMP-associated protein (VAP) (TC 9.B.17) family.

It carries out the reaction NAD(+) + H2O = ADP-D-ribose + nicotinamide + H(+). Functionally, may play a role in vesicle trafficking. The sequence is that of Vesicle-associated protein 1-4 (PVA14) from Arabidopsis thaliana (Mouse-ear cress).